We begin with the raw amino-acid sequence, 378 residues long: Deoxyhypusine synthase (378 aa).

NAD(+) is bound by residues 107 to 111 (SNLIS), 133 to 135 (SAG), Glu-139, and Asp-253. A spermidine-binding site is contributed by 138–139 (EE). Asp-258 provides a ligand contact to spermidine. Residue Gly-300 coordinates NAD(+). Residue His-305 coordinates spermidine. An NAD(+)-binding site is contributed by 325–326 (TG). Spermidine-binding positions include 331 to 333 (GSD) and 340 to 346 (EAISWGK). The active-site Nucleophile is Lys-346. 359–360 (DA) is a binding site for NAD(+).

Belongs to the deoxyhypusine synthase family. The cofactor is NAD(+).

It catalyses the reaction [eIF5A protein]-L-lysine + spermidine = [eIF5A protein]-deoxyhypusine + propane-1,3-diamine. It participates in protein modification; eIF5A hypusination. In terms of biological role, catalyzes the NAD-dependent oxidative cleavage of spermidine and the subsequent transfer of the butylamine moiety of spermidine to the epsilon-amino group of a specific lysine residue of the eIF-5A precursor protein to form the intermediate deoxyhypusine residue. The protein is Deoxyhypusine synthase (DYS1) of Debaryomyces hansenii (strain ATCC 36239 / CBS 767 / BCRC 21394 / JCM 1990 / NBRC 0083 / IGC 2968) (Yeast).